Reading from the N-terminus, the 216-residue chain is Endoplasmic reticulum vesicle protein 25 (216 aa).

A signal peptide spans 1–20; the sequence is MASLKSLLSGFLLLAGAAQA. The Lumenal portion of the chain corresponds to 21-185; sequence LKFDLEATSS…TNESTNNRVK (165 aa). A GOLD domain is found at 36–126; sequence RRCIRNFVNK…RRHVELDIDI (91 aa). A helical membrane pass occupies residues 186–206; that stretch reads WFGMATTFLLIALWGWQIMYL. The Cytoplasmic portion of the chain corresponds to 207-216; that stretch reads RAYFRSKHLI.

This sequence belongs to the EMP24/GP25L family.

It localises to the endoplasmic reticulum membrane. The protein localises to the golgi apparatus membrane. Its function is as follows. Constituent of COPII-coated endoplasmic reticulum-derived transport vesicles. Required for efficient transport of a subset of secretory proteins to the Golgi. Facilitates retrograde transport from the Golgi to the endoplasmic reticulum. The protein is Endoplasmic reticulum vesicle protein 25 (erv-1) of Neurospora crassa (strain ATCC 24698 / 74-OR23-1A / CBS 708.71 / DSM 1257 / FGSC 987).